The following is a 354-amino-acid chain: Green-sensitive opsin-3 (354 aa).

Over 1-39 the chain is Extracellular; that stretch reads MSGLNGFEGDNFYIPMSNRTGLVRDPFVYEQYYLAEPWQ. Residue Asn-18 is glycosylated (N-linked (GlcNAc...) asparagine). A helical membrane pass occupies residues 40–64; that stretch reads FKLLACYMFFLICLGLPINGFTLFV. Topologically, residues 65–76 are cytoplasmic; it reads TAQHKKLQQPLN. Residues 77-102 traverse the membrane as a helical segment; the sequence is FILVNLAVAGMIMVCFGFTITISSAV. At 103-116 the chain is on the extracellular side; it reads NGYFYFGPTACAIE. A disulfide bond links Cys-113 and Cys-190. A helical transmembrane segment spans residues 117-136; sequence GFMATLGGEVALWSLVVLAI. The Cytoplasmic segment spans residues 137–155; sequence ERYIVVCKPMGSFKFSASH. The helical transmembrane segment at 156-179 threads the bilayer; the sequence is ALGGIGFTWFMAMTCAAPPLVGWS. Topologically, residues 180–205 are extracellular; sequence RYIPEGLQCSCGPDYYTLNPKYNNES. Residue Asn-203 is glycosylated (N-linked (GlcNAc...) asparagine). Residues 206-233 form a helical membrane-spanning segment; the sequence is YVIYMFVVHFIVPVTVIFFTYGRLVCTV. At 234–255 the chain is on the cytoplasmic side; that stretch reads KSAAAAQQDSASTQKAEKEVTR. Residues 256 to 279 traverse the membrane as a helical segment; the sequence is MVILMVVGFLVAWTPYATVAAWIF. Topologically, residues 280–287 are extracellular; the sequence is FNKGAAFT. The chain crosses the membrane as a helical span at residues 288 to 312; the sequence is AQFMAVPAFFSKSSALFNPIIYVLL. Lys-299 carries the post-translational modification N6-(retinylidene)lysine. Topologically, residues 313-354 are cytoplasmic; it reads NKQFRNCMLTTLFCGKNPLGDEESSTVSTKTEVSTVSSVSPA.

It belongs to the G-protein coupled receptor 1 family. Opsin subfamily. In terms of tissue distribution, the color pigments are found in the cone photoreceptor cells.

It localises to the membrane. In terms of biological role, visual pigments are the light-absorbing molecules that mediate vision. They consist of an apoprotein, opsin, covalently linked to cis-retinal. In Psalidodon fasciatus (Banded astyanax), this protein is Green-sensitive opsin-3 (RH11).